The sequence spans 537 residues: Tegument protein BRRF2 (537 aa).

Disordered stretches follow at residues 325–474 and 486–537; these read LALP…EAQD and GLRV…LSVI. Over residues 334–347 the composition is skewed to polar residues; it reads KPQQTCSQLTSRGN. Low complexity predominate over residues 423–441; sequence SSQAAPSSSSVAPVASLSG. Residues 492-517 show a composition bias toward acidic residues; sequence DEDEDGSEDGEFSDLDLSDSDHEGDE.

Belongs to the lymphocryptovirus BRRF2 family.

The protein localises to the virion tegument. In Homo sapiens (Human), this protein is Tegument protein BRRF2.